Reading from the N-terminus, the 127-residue chain is Single-stranded DNA-binding protein 2 (127 aa).

The SSB domain maps to 4–103; that stretch reads INKVMLVGRC…ITINTIELLG (100 aa). Residues 104-127 form a disordered region; sequence SPRKEESTSTSAPNETQAVANANF. Polar residues predominate over residues 111-127; the sequence is TSTSAPNETQAVANANF.

In terms of assembly, homotetramer.

The sequence is that of Single-stranded DNA-binding protein 2 (ssb2) from Nostoc sp. (strain PCC 7120 / SAG 25.82 / UTEX 2576).